The chain runs to 366 residues: Histone-lysine N-methyltransferase SETD7 (366 aa).

3 MORN repeats span residues 36–58 (FEGN…DGST), 59–81 (LEGY…DGGV), and 106–128 (FKGQ…DGGS). Residues 214–336 (ERVYVAESLI…ADEELTVAYG (123 aa)) form the SET domain. S-adenosyl-L-methionine is bound by residues 226 to 228 (AGE), asparagine 296, histidine 297, and glutamate 356.

It belongs to the class V-like SAM-binding methyltransferase superfamily. Histone-lysine methyltransferase family. SET7 subfamily. Interacts with IPF1/PDX-1. In terms of tissue distribution, widely expressed. Expressed in pancreatic islets.

The protein localises to the nucleus. It is found in the chromosome. The enzyme catalyses L-lysyl(4)-[histone H3] + S-adenosyl-L-methionine = N(6)-methyl-L-lysyl(4)-[histone H3] + S-adenosyl-L-homocysteine + H(+). The catalysed reaction is L-lysyl-[protein] + S-adenosyl-L-methionine = N(6)-methyl-L-lysyl-[protein] + S-adenosyl-L-homocysteine + H(+). Its function is as follows. Histone methyltransferase that specifically monomethylates 'Lys-4' of histone H3. H3 'Lys-4' methylation represents a specific tag for epigenetic transcriptional activation. Plays a central role in the transcriptional activation of genes such as collagenase or insulin. Recruited by IPF1/PDX-1 to the insulin promoter, leading to activate transcription. Also has methyltransferase activity toward non-histone proteins such as CGAS, p53/TP53, TAF10, and possibly TAF7 by recognizing and binding the [KR]-[STA]-K in substrate proteins. Monomethylates 'Lys-189' of TAF10, leading to increase the affinity of TAF10 for RNA polymerase II. Monomethylates 'Lys-372' of p53/TP53, stabilizing p53/TP53 and increasing p53/TP53-mediated transcriptional activation. Monomethylates 'Lys-491' of CGAS, promoting interaction between SGF29 and CGAS. In Homo sapiens (Human), this protein is Histone-lysine N-methyltransferase SETD7 (SETD7).